An 89-amino-acid polypeptide reads, in one-letter code: Small ribosomal subunit protein uS15 (89 aa).

Belongs to the universal ribosomal protein uS15 family. As to quaternary structure, part of the 30S ribosomal subunit. Forms a bridge to the 50S subunit in the 70S ribosome, contacting the 23S rRNA.

Its function is as follows. One of the primary rRNA binding proteins, it binds directly to 16S rRNA where it helps nucleate assembly of the platform of the 30S subunit by binding and bridging several RNA helices of the 16S rRNA. Forms an intersubunit bridge (bridge B4) with the 23S rRNA of the 50S subunit in the ribosome. The chain is Small ribosomal subunit protein uS15 from Geobacillus sp. (strain WCH70).